A 123-amino-acid chain; its full sequence is Small ribosomal subunit protein cS23 (123 aa).

The protein belongs to the chloroplast-specific ribosomal protein cS23 family. As to quaternary structure, part of the 30S ribosomal subunit.

It is found in the plastid. The protein resides in the chloroplast. Its function is as follows. Probably a ribosomal protein or a ribosome-associated protein. The sequence is that of Small ribosomal subunit protein cS23 (ycf65) from Mesostigma viride (Green alga).